We begin with the raw amino-acid sequence, 160 residues long: Ureidoglycolate lyase (160 aa).

It belongs to the ureidoglycolate lyase family. As to quaternary structure, homodimer. The cofactor is Ni(2+).

The enzyme catalyses (S)-ureidoglycolate = urea + glyoxylate. It participates in nitrogen metabolism; (S)-allantoin degradation. Catalyzes the catabolism of the allantoin degradation intermediate (S)-ureidoglycolate, generating urea and glyoxylate. Involved in the utilization of allantoin as nitrogen source. This Salmonella typhimurium (strain LT2 / SGSC1412 / ATCC 700720) protein is Ureidoglycolate lyase.